The primary structure comprises 165 residues: Large ribosomal subunit protein uL10 (165 aa).

The protein belongs to the universal ribosomal protein uL10 family. Part of the ribosomal stalk of the 50S ribosomal subunit. The N-terminus interacts with L11 and the large rRNA to form the base of the stalk. The C-terminus forms an elongated spine to which L12 dimers bind in a sequential fashion forming a multimeric L10(L12)X complex.

Its function is as follows. Forms part of the ribosomal stalk, playing a central role in the interaction of the ribosome with GTP-bound translation factors. The sequence is that of Large ribosomal subunit protein uL10 from Deinococcus deserti (strain DSM 17065 / CIP 109153 / LMG 22923 / VCD115).